We begin with the raw amino-acid sequence, 272 residues long: Biglycan (272 aa).

Positions 1 to 16 (MWPLWLLASLLALSQA) are cleaved as a signal peptide. Residues 17–37 (LPFEQKAFWDFTLDDGLPMLN) constitute a propeptide that is removed on maturation. 2 O-linked (Xyl...) (glycosaminoglycan) serine glycosylation sites follow: S42 and S48. One can recognise an LRRNT domain in the interval 55–91 (ALPPTFSAMCPFGCHCHLRVVQCSDLGLKAVPKEISP). Disulfide bonds link C64-C70 and C68-C77. LRR repeat units follow at residues 92–113 (DTTL…DFKG), 116–137 (HLYA…PSAP), 138–161 (DGLK…DLPE), 162–183 (TLNE…DLLR), 186–209 (KLYR…SFLP), 210–232 (TLRE…PDLK), 233–254 (LLQV…DFCP), and 255–272 (VGFG…LFNN).

The protein belongs to the small leucine-rich proteoglycan (SLRP) family. SLRP class I subfamily. As to quaternary structure, homodimer. Forms a ternary complex with MFAP2 and ELN. The two attached glycosaminoglycan chains can be either chondroitin sulfate or dermatan sulfate. In terms of tissue distribution, found in several connective tissues, especially in articular cartilages.

It localises to the secreted. The protein localises to the extracellular space. It is found in the extracellular matrix. Its function is as follows. May be involved in collagen fiber assembly. In Sus scrofa (Pig), this protein is Biglycan (BGN).